Consider the following 218-residue polypeptide: Redox-sensing transcriptional repressor Rex (218 aa).

A DNA-binding region (H-T-H motif) is located at residues 25–64 (WYLSYVQLLHADGCESVSSTRIARAVGVDASLVAKDLSYV). 99–104 (GVGSLG) contributes to the NAD(+) binding site.

It belongs to the transcriptional regulatory Rex family. Homodimer.

It localises to the cytoplasm. Functionally, modulates transcription in response to changes in cellular NADH/NAD(+) redox state. The sequence is that of Redox-sensing transcriptional repressor Rex from Porphyromonas gingivalis (strain ATCC 33277 / DSM 20709 / CIP 103683 / JCM 12257 / NCTC 11834 / 2561).